The primary structure comprises 531 residues: Galactose/methyl galactoside import permease protein MglC (531 aa).

10 helical membrane-spanning segments follow: residues 193–213 (FFLANGLYIAIAVFFIACIVV), 239–259 (MFYAVGVAGIILLAGTDLSIG), 267–287 (VVTGIILHPGQNIVTFFGLGP), 300–320 (VMSLAVSVALCVSFSLFAGFF), 326–346 (IHPFISTLATQLIIYGVLFFG), 376–396 (LVTFPKLIIPATIAVAIAWFI), 424–444 (FGVTMSVFAMAAVFYGFGAFF), 461–481 (LDAIASCVVGGISFNGGIGKL), 483–503 (GAVVGVIIFTGLTYCLTFLGI), and 505–525 (TNLQFVFKGLIIIAAVALDSV).

Belongs to the binding-protein-dependent transport system permease family. AraH/RbsC subfamily. In terms of assembly, the complex is composed of one ATP-binding protein (MglA), two transmembrane proteins (MglC) and a solute-binding protein (MglB).

It localises to the cell membrane. Part of the ABC transporter complex MglABC involved in galactose/methyl galactoside import. Probably responsible for the translocation of the substrate across the membrane. This Treponema pallidum (strain Nichols) protein is Galactose/methyl galactoside import permease protein MglC (mglC).